Here is a 294-residue protein sequence, read N- to C-terminus: Movement protein (294 aa).

As to quaternary structure, interacts with nucleoprotein.

In terms of biological role, transports viral genome to neighboring plant cells directly through plasmosdesmata, without any budding. The movement protein allows efficient cell to cell propagation, by bypassing the host cell wall barrier. Displays an RNA-binding activity. The chain is Movement protein (3) from Rice yellow stunt virus (RYSV).